The chain runs to 255 residues: 3-dehydroquinate dehydratase (255 aa).

Residues 47–49 (EWR) and Arg-83 each bind 3-dehydroquinate. The active-site Proton donor/acceptor is the His-144. Catalysis depends on Lys-171, which acts as the Schiff-base intermediate with substrate. 3-dehydroquinate-binding residues include Arg-214, Ser-233, and Gln-237.

Belongs to the type-I 3-dehydroquinase family. In terms of assembly, homodimer or homotetramer.

It catalyses the reaction 3-dehydroquinate = 3-dehydroshikimate + H2O. Its pathway is metabolic intermediate biosynthesis; chorismate biosynthesis; chorismate from D-erythrose 4-phosphate and phosphoenolpyruvate: step 3/7. Its function is as follows. Involved in the third step of the chorismate pathway, which leads to the biosynthesis of aromatic amino acids. Catalyzes the cis-dehydration of 3-dehydroquinate (DHQ) and introduces the first double bond of the aromatic ring to yield 3-dehydroshikimate. The reaction involves the formation of an imine intermediate between the keto group of 3-dehydroquinate and the epsilon-amino group of Lys-170 at the active site. This Clostridioides difficile (strain 630) (Peptoclostridium difficile) protein is 3-dehydroquinate dehydratase.